The sequence spans 405 residues: Tryptophan synthase beta chain (405 aa).

Lysine 86 carries the N6-(pyridoxal phosphate)lysine modification.

This sequence belongs to the TrpB family. Tetramer of two alpha and two beta chains. It depends on pyridoxal 5'-phosphate as a cofactor.

It catalyses the reaction (1S,2R)-1-C-(indol-3-yl)glycerol 3-phosphate + L-serine = D-glyceraldehyde 3-phosphate + L-tryptophan + H2O. It functions in the pathway amino-acid biosynthesis; L-tryptophan biosynthesis; L-tryptophan from chorismate: step 5/5. Functionally, the beta subunit is responsible for the synthesis of L-tryptophan from indole and L-serine. This is Tryptophan synthase beta chain from Shewanella piezotolerans (strain WP3 / JCM 13877).